The chain runs to 349 residues: Phosphoribosylformylglycinamidine cyclo-ligase (349 aa).

This sequence belongs to the AIR synthase family.

It is found in the cytoplasm. It catalyses the reaction 2-formamido-N(1)-(5-O-phospho-beta-D-ribosyl)acetamidine + ATP = 5-amino-1-(5-phospho-beta-D-ribosyl)imidazole + ADP + phosphate + H(+). It functions in the pathway purine metabolism; IMP biosynthesis via de novo pathway; 5-amino-1-(5-phospho-D-ribosyl)imidazole from N(2)-formyl-N(1)-(5-phospho-D-ribosyl)glycinamide: step 2/2. The chain is Phosphoribosylformylglycinamidine cyclo-ligase from Methanococcus maripaludis (strain C6 / ATCC BAA-1332).